The chain runs to 437 residues: UDP-N-acetylmuramoylalanine--D-glutamate ligase (437 aa).

115–121 (GSNGKST) contributes to the ATP binding site.

It belongs to the MurCDEF family.

The protein localises to the cytoplasm. It catalyses the reaction UDP-N-acetyl-alpha-D-muramoyl-L-alanine + D-glutamate + ATP = UDP-N-acetyl-alpha-D-muramoyl-L-alanyl-D-glutamate + ADP + phosphate + H(+). Its pathway is cell wall biogenesis; peptidoglycan biosynthesis. Functionally, cell wall formation. Catalyzes the addition of glutamate to the nucleotide precursor UDP-N-acetylmuramoyl-L-alanine (UMA). In Vibrio campbellii (strain ATCC BAA-1116), this protein is UDP-N-acetylmuramoylalanine--D-glutamate ligase.